Reading from the N-terminus, the 114-residue chain is Ribonuclease P protein component (114 aa).

Belongs to the RnpA family. Consists of a catalytic RNA component (M1 or rnpB) and a protein subunit.

It carries out the reaction Endonucleolytic cleavage of RNA, removing 5'-extranucleotides from tRNA precursor.. Its function is as follows. RNaseP catalyzes the removal of the 5'-leader sequence from pre-tRNA to produce the mature 5'-terminus. It can also cleave other RNA substrates such as 4.5S RNA. The protein component plays an auxiliary but essential role in vivo by binding to the 5'-leader sequence and broadening the substrate specificity of the ribozyme. This chain is Ribonuclease P protein component, found in Borrelia duttonii (strain Ly).